We begin with the raw amino-acid sequence, 442 residues long: Capsid vertex component 1 (442 aa).

It belongs to the herpesviridae CVC1 protein family. Interacts (via C-terminus) with capsid vertex component 2/CVC2.

It is found in the virion. Its subcellular location is the host nucleus. In terms of biological role, capsid vertex-specific component that plays a role during viral DNA encapsidation, assuring correct genome cleavage and presumably stabilizing capsids that contain full-length viral genomes. This Homo sapiens (Human) protein is Capsid vertex component 1.